Reading from the N-terminus, the 605-residue chain is Elongation factor 4 (605 aa).

Residues 11-193 form the tr-type G domain; sequence KNIRNFSIIA…RLVDVIPAPE (183 aa). GTP is bound by residues 23 to 28 and 140 to 143; these read DHGKST and NKID.

Belongs to the TRAFAC class translation factor GTPase superfamily. Classic translation factor GTPase family. LepA subfamily.

The protein resides in the cell inner membrane. The catalysed reaction is GTP + H2O = GDP + phosphate + H(+). Its function is as follows. Required for accurate and efficient protein synthesis under certain stress conditions. May act as a fidelity factor of the translation reaction, by catalyzing a one-codon backward translocation of tRNAs on improperly translocated ribosomes. Back-translocation proceeds from a post-translocation (POST) complex to a pre-translocation (PRE) complex, thus giving elongation factor G a second chance to translocate the tRNAs correctly. Binds to ribosomes in a GTP-dependent manner. The polypeptide is Elongation factor 4 (Acinetobacter baylyi (strain ATCC 33305 / BD413 / ADP1)).